The primary structure comprises 182 residues: MKQRLLFLGPPGAGKGTQAERLCAAHELMHLSTGDLLRTEVGAKTPLGQEAAAVMNRGELVSDELVLAIVENQLKNQNGGWLLDGFPRTLIQAKALEPLLEELKQPIEAVVLLELNDAVLIERLISRGRSDDNESVIRNRLEVYREKTAPLIDHYRQQGLLQTVEAHGSIESIAISIEKSLC.

12–17 (GAGKGT) contacts ATP. Positions 32-61 (STGDLLRTEVGAKTPLGQEAAAVMNRGELV) are NMP. AMP is bound by residues Thr-33, Arg-38, 59–61 (ELV), 85–88 (GFPR), and Gln-92. Positions 126 to 132 (SRGRSDD) are LID. Arg-127 contributes to the ATP binding site. AMP-binding residues include Arg-129 and Arg-140. Residue Gly-168 coordinates ATP.

The protein belongs to the adenylate kinase family. Monomer.

The protein resides in the cytoplasm. The catalysed reaction is AMP + ATP = 2 ADP. It participates in purine metabolism; AMP biosynthesis via salvage pathway; AMP from ADP: step 1/1. In terms of biological role, catalyzes the reversible transfer of the terminal phosphate group between ATP and AMP. Plays an important role in cellular energy homeostasis and in adenine nucleotide metabolism. The chain is Adenylate kinase from Prochlorococcus marinus (strain MIT 9313).